We begin with the raw amino-acid sequence, 313 residues long: Sideroflexin-4 (313 aa).

The next 5 membrane-spanning stretches (helical) occupy residues 87–107 (AALL…VKSL), 141–161 (LLLG…PRLL), 175–191 (FIPV…NVIA), 230–247 (VVLF…AYFF), and 269–289 (VLVM…IGRI).

Belongs to the sideroflexin family.

The protein resides in the mitochondrion inner membrane. Its function is as follows. Mitochondrial amino-acid transporter. Does not act as a serine transporter: not able to mediate transport of serine into mitochondria. The sequence is that of Sideroflexin-4 from Bos taurus (Bovine).